The following is a 193-amino-acid chain: ATP-dependent Clp protease proteolytic subunit 2 (193 aa).

The active-site Nucleophile is the S98. The active site involves H123.

This sequence belongs to the peptidase S14 family. As to quaternary structure, fourteen ClpP subunits assemble into 2 heptameric rings which stack back to back to give a disk-like structure with a central cavity, resembling the structure of eukaryotic proteasomes.

It is found in the cytoplasm. The catalysed reaction is Hydrolysis of proteins to small peptides in the presence of ATP and magnesium. alpha-casein is the usual test substrate. In the absence of ATP, only oligopeptides shorter than five residues are hydrolyzed (such as succinyl-Leu-Tyr-|-NHMec, and Leu-Tyr-Leu-|-Tyr-Trp, in which cleavage of the -Tyr-|-Leu- and -Tyr-|-Trp bonds also occurs).. Functionally, cleaves peptides in various proteins in a process that requires ATP hydrolysis. Has a chymotrypsin-like activity. Plays a major role in the degradation of misfolded proteins. This Bacillus cereus (strain ATCC 14579 / DSM 31 / CCUG 7414 / JCM 2152 / NBRC 15305 / NCIMB 9373 / NCTC 2599 / NRRL B-3711) protein is ATP-dependent Clp protease proteolytic subunit 2.